The primary structure comprises 546 residues: Chaperonin GroEL (546 aa).

Residues 30–33 (TLGP), K51, 87–91 (DGTTT), G415, 479–481 (NAA), and D495 contribute to the ATP site. Residues 526 to 546 (KEDAPMPGGMPGGMGGMGMDM) are disordered. A compositionally biased stretch (gly residues) spans 534–546 (GMPGGMGGMGMDM).

The protein belongs to the chaperonin (HSP60) family. As to quaternary structure, forms a cylinder of 14 subunits composed of two heptameric rings stacked back-to-back. Interacts with the co-chaperonin GroES.

The protein resides in the cytoplasm. The catalysed reaction is ATP + H2O + a folded polypeptide = ADP + phosphate + an unfolded polypeptide.. Functionally, together with its co-chaperonin GroES, plays an essential role in assisting protein folding. The GroEL-GroES system forms a nano-cage that allows encapsulation of the non-native substrate proteins and provides a physical environment optimized to promote and accelerate protein folding. This is Chaperonin GroEL from Burkholderia cepacia (Pseudomonas cepacia).